The primary structure comprises 555 residues: F-box protein COS111 (555 aa).

2 disordered regions span residues 31 to 82 (MSVS…SVSN) and 124 to 147 (DHSIKSGVTRSTVSTVRPTSKQHH). A compositionally biased stretch (low complexity) spans 32–42 (SVSSRSSQEES). Over residues 48–61 (ESVSSLSMQEQQTE) the composition is skewed to polar residues. Residues 129–142 (SGVTRSTVSTVRPT) show a composition bias toward low complexity. Positions 196-246 (HKDLNSLPHEIMSKIVSHLDQRDVTMCLYVNKNMYSTAVRQLYKEPFFSST) constitute an F-box domain. Positions 327–346 (SSSSLSCSRTSSNSNSSTES) are enriched in low complexity. The segment at 327–354 (SSSSLSCSRTSSNSNSSTESKPVKKRRS) is disordered.

Functionally, F-box protein probably involved in ubiquitin conjugation pathway. The polypeptide is F-box protein COS111 (COS111) (Yarrowia lipolytica (strain CLIB 122 / E 150) (Yeast)).